Reading from the N-terminus, the 424-residue chain is Tyrosine--tRNA ligase (424 aa).

Residue Tyr33 coordinates L-tyrosine. Residues 38 to 47 (PSADSLHIGH) carry the 'HIGH' region motif. Positions 170 and 174 each coordinate L-tyrosine. The 'KMSKS' region motif lies at 230–234 (KFGKT). Lys233 is a binding site for ATP. The 68-residue stretch at 357 to 424 (MSLIDALVRC…RRHYHLIRLV (68 aa)) folds into the S4 RNA-binding domain.

It belongs to the class-I aminoacyl-tRNA synthetase family. TyrS type 1 subfamily. Homodimer.

Its subcellular location is the cytoplasm. It catalyses the reaction tRNA(Tyr) + L-tyrosine + ATP = L-tyrosyl-tRNA(Tyr) + AMP + diphosphate + H(+). Catalyzes the attachment of tyrosine to tRNA(Tyr) in a two-step reaction: tyrosine is first activated by ATP to form Tyr-AMP and then transferred to the acceptor end of tRNA(Tyr). The protein is Tyrosine--tRNA ligase of Roseiflexus castenholzii (strain DSM 13941 / HLO8).